Consider the following 747-residue polypeptide: Transcription factor phm2 (747 aa).

Residues 21–50 (CNACRKRKRVRCDRLHPCSNCASRGLGSTC) constitute a DNA-binding region (zn(2)-C6 fungal-type). Disordered stretches follow at residues 112–150 (GLQN…DHGS) and 414–436 (TAEP…PESR).

The protein resides in the nucleus. Its function is as follows. Transcription factor that regulates the expression of the gene cluster that mediates the biosynthesis of the trans-fused decalin-containing tetramic acid phomasetin. The protein is Transcription factor phm2 of Pyrenochaetopsis sp.